Consider the following 323-residue polypeptide: Aldo-keto reductase family 1 member C13 (323 aa).

NAD(+)-binding positions include 20–24 (GFGTY), D50, and Y55. Y55 acts as the Proton donor in catalysis. H117 provides a ligand contact to substrate. NAD(+) is bound by residues 166–167 (SN), Q190, 216–224 (YGALGTQRY), and 270–280 (QSFKENEMREN).

The protein belongs to the aldo/keto reductase family.

Catalyzes the dehydrogenation of 17-beta-hydroxysteroids. May also exhibit significant activity with a variety of cyclic and alicyclic alcohols. Uses both NAD and NADP, but the activity is much greater with NAD than with NADP. In Mus musculus (Mouse), this protein is Aldo-keto reductase family 1 member C13 (Akr1c13).